We begin with the raw amino-acid sequence, 215 residues long: MKTVLLTGFDPFGGESINPAWEVAKSLHEKTIGEYKIISKQVPTVFHKSISVLKEYIEELAPEFIICIGQAGGRPNITIERVAINIDDARIADNEGNQPVDVPVVEEGPAAYWSTLPMKAIVKKLQEEGIPASVSQTAGTFVCNHLFYGLMHELEKHDTKMKGGFIHIPFLPEQASNYPGQPSMSLSTIRKGIELAVEVTTTVEVDIVEVGGATH.

Active-site residues include Glu-80, Cys-143, and His-167.

The protein belongs to the peptidase C15 family. As to quaternary structure, homotetramer.

Its subcellular location is the cytoplasm. The enzyme catalyses Release of an N-terminal pyroglutamyl group from a polypeptide, the second amino acid generally not being Pro.. Functionally, removes 5-oxoproline from various penultimate amino acid residues except L-proline. The polypeptide is Pyrrolidone-carboxylate peptidase (Bacillus cereus (strain 03BB102)).